A 149-amino-acid polypeptide reads, in one-letter code: Large ribosomal subunit protein bL9 (149 aa).

Belongs to the bacterial ribosomal protein bL9 family.

Functionally, binds to the 23S rRNA. The chain is Large ribosomal subunit protein bL9 from Shewanella amazonensis (strain ATCC BAA-1098 / SB2B).